Here is a 307-residue protein sequence, read N- to C-terminus: F-box protein At2g23160 (307 aa).

Residues 2 to 49 (NSSSPISIDLIAEILSRVPSKSVARFRCVSKPWASMIRRPYFTELFLT) enclose the F-box domain.

The sequence is that of F-box protein At2g23160 from Arabidopsis thaliana (Mouse-ear cress).